The primary structure comprises 877 residues: Lipophilic envelope-spanning tunnel protein B (877 aa).

Residues 1-19 lie on the Cytoplasmic side of the membrane; the sequence is MSQETPASTTEAQIKNKRR. Residues 20-40 traverse the membrane as a helical segment; the sequence is ISPFWLLPFIALMIASWLIWD. Topologically, residues 41 to 877 are periplasmic; that stretch reads SYQDRGNTVT…WREWGTALPK (837 aa). MCE/MlaD regions lie at residues 46–149, 160–272, 279–382, 391–499, 515–625, 634–737, and 746–862; these read GNTV…VALD, DLMI…GLYE, RGVI…VVPG, DVLT…PLYA, TTVS…ILYA, GGQI…LQEA, and DGLS…LLQE.

The protein belongs to the PqiB family. Homohexamer. May interact with LetA in the inner membrane. May also interact with partners in the outer membrane.

It localises to the cell inner membrane. Functionally, forms a tunnel that spans the entire periplasmic space. Is probably involved in the transport of lipids between the inner membrane and the outer membrane through the tunnel. Forms a dynamic tunnel sufficiently long to mediate lipid transport directly between the two membranes without the need for a shuttle protein. Binds phospholipids. Lipids bind inside the tunnel. Required for outer membrane homeostasis. Contributes to membrane integrity. In Escherichia coli (strain K12), this protein is Lipophilic envelope-spanning tunnel protein B.